Reading from the N-terminus, the 204-residue chain is FMN-dependent NADH:quinone oxidoreductase (204 aa).

Position 9 (S9) interacts with FMN.

The protein belongs to the azoreductase type 1 family. In terms of assembly, homodimer. It depends on FMN as a cofactor.

The enzyme catalyses 2 a quinone + NADH + H(+) = 2 a 1,4-benzosemiquinone + NAD(+). The catalysed reaction is N,N-dimethyl-1,4-phenylenediamine + anthranilate + 2 NAD(+) = 2-(4-dimethylaminophenyl)diazenylbenzoate + 2 NADH + 2 H(+). Quinone reductase that provides resistance to thiol-specific stress caused by electrophilic quinones. Functionally, also exhibits azoreductase activity. Catalyzes the reductive cleavage of the azo bond in aromatic azo compounds to the corresponding amines. The polypeptide is FMN-dependent NADH:quinone oxidoreductase (Thiobacillus denitrificans (strain ATCC 25259 / T1)).